An 818-amino-acid polypeptide reads, in one-letter code: BDNF/NT-3 growth factors receptor (818 aa).

An N-terminal signal peptide occupies residues 1–31 (MVSWRRRPGPGLARLWGLCCLVLGCWRGALG). 2 disulfide bridges follow: Cys32-Cys38 and Cys36-Cys45. The Extracellular segment spans residues 32–426 (CPASCRCSSW…DVSNKENEDS (395 aa)). Asn66 is a glycosylation site (N-linked (GlcNAc...) asparagine). One copy of the LRR 1 repeat lies at 71–92 (YIANQRKLESINDNEVGFYVGL). A glycan (N-linked (GlcNAc...) asparagine) is linked at Asn94. One copy of the LRR 2 repeat lies at 95-116 (LTVVDSGLRFVSRQAFVKNINL). A glycan (N-linked (GlcNAc...) asparagine) is linked at Asn120. 2 disulfides stabilise this stretch: Cys151–Cys175 and Cys153–Cys193. The 86-residue stretch at 196–281 (PSANLSNYNI…GEVQTSAELT (86 aa)) folds into the Ig-like C2-type 1 domain. Residues Asn199, Asn204, Asn226, Asn253, Asn287, Asn324, and Asn337 are each glycosylated (N-linked (GlcNAc...) asparagine). Residues Cys217 and Cys265 are joined by a disulfide bond. One can recognise an Ig-like C2-type 2 domain in the interval 295–364 (TPDHHWCIPF…NGAYTLLAKN (70 aa)). Residues Cys301 and Cys344 are joined by a disulfide bond. Residues 384 to 394 (GSGPIVDPDVY) are provides specificity for BDNF as ligand versus NTF3 and NTF4. Residues 400-418 (PNDLGDTTNNSNQITSPDV) show a composition bias toward polar residues. The interval 400–420 (PNDLGDTTNNSNQITSPDVSN) is disordered. N-linked (GlcNAc...) asparagine glycosylation occurs at Asn408. A helical transmembrane segment spans residues 427–450 (ITVYVVVGIAALVCTGLVIMLIIL). The Cytoplasmic segment spans residues 451–818 (KFGRHSKFGM…ASPVYLDILG (368 aa)). Positions 469–494 (NDDDSASPLHHISNGSNTPSSSEGGP) are disordered. The segment covering 481–491 (SNGSNTPSSSE) has biased composition (polar residues). Tyr512 carries the phosphotyrosine; by autocatalysis modification. The Protein kinase domain occupies 534–803 (IVLKRELGEG…LNIKEIHSLL (270 aa)). ATP is bound by residues 540–548 (LGEGAFGKV) and Lys568. The active-site Proton acceptor is Asp672. Phosphotyrosine; by autocatalysis occurs at positions 698, 702, 703, and 813.

The protein belongs to the protein kinase superfamily. Tyr protein kinase family. Insulin receptor subfamily. As to quaternary structure, exists in a dynamic equilibrium between monomeric (low affinity) and dimeric (high affinity) structures. Interacts (phosphorylated upon activation by BDNF) with SHC1; mediates SHC1 phosphorylation and activation. Interacts (phosphorylated upon activation by BDNF) with PLCG1 and/or PLCG2; mediates PLCG1 phosphorylation and activation. Interacts with SH2B1 and SH2B2. Interacts with NGFR; may regulate the ligand specificity of the receptor. Interacts with SORCS2; this interaction is important for normal targeting to post-synaptic densities in response to high-frequency stimulation. Interacts (phosphorylated upon ligand-binding) with SH2D1A; regulates NTRK2. Interacts with SQSTM1 and KIDINS220. Interacts (phosphorylated upon ligand-binding) with FRS2; activates the MAPK signaling pathway. Interacts with APPL1. Interacts with MAPK8IP3/JIP3 and KLC1; interaction with KLC1 is mediated by MAPK8IP3/JIP3. In terms of processing, ligand-mediated auto-phosphorylation. In terms of tissue distribution, detected in embryonic brain and orsal root ganglia.

It is found in the cell membrane. Its subcellular location is the endosome membrane. The protein localises to the cell projection. The protein resides in the axon. It localises to the dendrite. It is found in the cytoplasm. Its subcellular location is the perinuclear region. The protein localises to the postsynaptic density. It carries out the reaction L-tyrosyl-[protein] + ATP = O-phospho-L-tyrosyl-[protein] + ADP + H(+). With respect to regulation, the neuronal activity and the influx of calcium positively regulate the kinase activity and the internalization of the receptor which are both important for active signaling. Regulated by NGFR that may control the internalization of the receptor. NGFR may also stimulate the activation by BDNF compared to NTF3 and NTF4. The formation of active receptors dimers able to fully transduce the ligand-mediated signal, may be negatively regulated by the formation of inactive heterodimers with the non-catalytic isoforms. Receptor tyrosine kinase involved in the development and the maturation of the central and the peripheral nervous systems through regulation of neuron survival, proliferation, migration, differentiation, and synapse formation and plasticity. Receptor for BDNF/brain-derived neurotrophic factor and NTF4/neurotrophin-4. Alternatively can also bind NTF3/neurotrophin-3 which is less efficient in activating the receptor but regulates neuron survival through NTRK2. Upon ligand-binding, undergoes homodimerization, autophosphorylation and activation. Recruits, phosphorylates and/or activates several downstream effectors including SHC1, FRS2, SH2B1, SH2B2 and PLCG1 that regulate distinct overlapping signaling cascades. Through SHC1, FRS2, SH2B1, SH2B2 activates the GRB2-Ras-MAPK cascade that regulates for instance neuronal differentiation including neurite outgrowth. Through the same effectors controls the Ras-PI3 kinase-AKT1 signaling cascade that mainly regulates growth and survival. Through PLCG1 and the downstream protein kinase C-regulated pathways controls synaptic plasticity. Thereby, plays a role in learning and memory by regulating both short term synaptic function and long-term potentiation. PLCG1 also leads to NF-Kappa-B activation and the transcription of genes involved in cell survival. Hence, it is able to suppress anoikis, the apoptosis resulting from loss of cell-matrix interactions. May also play a role in neutrophin-dependent calcium signaling in glial cells and mediate communication between neurons and glia. The protein is BDNF/NT-3 growth factors receptor (NTRK2) of Gallus gallus (Chicken).